The primary structure comprises 362 residues: MLRSKLSSLREYLTPINHNSNFLTTGEISPEEFVKAGDYLVYKFPTWQWASCPKDLQKLFLPTDKQVLVTRHVPSHQRANEYFEGEFEVEIDEKDRDLALGNESNLKNGENGENDDEAEYGWIRSGRSSSEKGTGEVLDPQRVEEVNDIDELIDETAEGEEEEEEGEEGEGEGNGNGADFHADDDADYDDLDIVQGSHSKLRRYDLYITYSTSYRVPKLYLVGFDANGIPLLPQQMFEDINSDYKDKTATIEQLPVAHNTTSVSIHPCKHSSVMRVLMKHQRARREHENVAENMKRLSIGSEDHKEAMNHIRRLSAGSKELAQKQEEPNDSEIKVDLYLVIFLKFIASVTPGIEYDYTMDAL.

A flexible region region spans residues 82-198 (YFEGEFEVEI…DDLDIVQGSH (117 aa)). The disordered stretch occupies residues 101–186 (GNESNLKNGE…GADFHADDDA (86 aa)). The segment covering 129–145 (SSEKGTGEVLDPQRVEE) has biased composition (basic and acidic residues). Residues 146 to 171 (VNDIDELIDETAEGEEEEEEGEEGEG) show a composition bias toward acidic residues. Cys268 functions as the Glycyl thioester intermediate in the catalytic mechanism. The tract at residues 272-337 (SVMRVLMKHQ…PNDSEIKVDL (66 aa)) is handle region.

The protein belongs to the ATG3 family. Monomer. Interacts with ATG8 through an intermediate thioester bond through the C-terminal Gly of ATG8. Also interacts with the 40 amino acid C-terminal region of the E1-like ATG7 enzyme. Also interacts with the ATG12-ATG5 conjugate.

It localises to the cytoplasm. In terms of biological role, E2 conjugating enzyme required for the cytoplasm to vacuole transport (Cvt) and autophagy. Required for selective autophagic degradation of the nucleus (nucleophagy) as well as for mitophagy which contributes to regulate mitochondrial quantity and quality by eliminating the mitochondria to a basal level to fulfill cellular energy requirements and preventing excess ROS production. Responsible for the E2-like covalent binding of phosphatidylethanolamine to the C-terminal Gly of ATG8. The ATG12-ATG5 conjugate plays a role of an E3 and promotes the transfer of ATG8 from ATG3 to phosphatidylethanolamine (PE). This step is required for the membrane association of ATG8. The formation of the ATG8-phosphatidylethanolamine conjugate is essential for autophagy and for the cytoplasm to vacuole transport (Cvt). The ATG8-PE conjugate mediates tethering between adjacent membranes and stimulates membrane hemifusion, leading to expansion of the autophagosomal membrane during autophagy. The chain is Autophagy-related protein 3 (ATG3) from Lodderomyces elongisporus (strain ATCC 11503 / CBS 2605 / JCM 1781 / NBRC 1676 / NRRL YB-4239) (Yeast).